Reading from the N-terminus, the 133-residue chain is Transcription antitermination protein NusB (133 aa).

The protein belongs to the NusB family.

Its function is as follows. Involved in transcription antitermination. Required for transcription of ribosomal RNA (rRNA) genes. Binds specifically to the boxA antiterminator sequence of the ribosomal RNA (rrn) operons. This Shewanella denitrificans (strain OS217 / ATCC BAA-1090 / DSM 15013) protein is Transcription antitermination protein NusB.